We begin with the raw amino-acid sequence, 162 residues long: Ribosome maturation factor RimP (162 aa).

Belongs to the RimP family.

It localises to the cytoplasm. Functionally, required for maturation of 30S ribosomal subunits. This is Ribosome maturation factor RimP from Beutenbergia cavernae (strain ATCC BAA-8 / DSM 12333 / CCUG 43141 / JCM 11478 / NBRC 16432 / NCIMB 13614 / HKI 0122).